A 534-amino-acid chain; its full sequence is Apolipoprotein N-acyltransferase (534 aa).

Transmembrane regions (helical) follow at residues leucine 18–alanine 38, alanine 39–aspartate 59, tryptophan 74–valine 94, leucine 105–alanine 125, isoleucine 127–glutamate 147, valine 178–alanine 198, and alanine 209–alanine 229. In terms of domain architecture, CN hydrolase spans valine 246–arginine 496. The active-site Proton acceptor is the glutamate 291. The active site involves lysine 355. Cysteine 408 (nucleophile) is an active-site residue. Residues threonine 504–valine 524 traverse the membrane as a helical segment.

The protein belongs to the CN hydrolase family. Apolipoprotein N-acyltransferase subfamily.

It is found in the cell inner membrane. It carries out the reaction N-terminal S-1,2-diacyl-sn-glyceryl-L-cysteinyl-[lipoprotein] + a glycerophospholipid = N-acyl-S-1,2-diacyl-sn-glyceryl-L-cysteinyl-[lipoprotein] + a 2-acyl-sn-glycero-3-phospholipid + H(+). It participates in protein modification; lipoprotein biosynthesis (N-acyl transfer). In terms of biological role, catalyzes the phospholipid dependent N-acylation of the N-terminal cysteine of apolipoprotein, the last step in lipoprotein maturation. This chain is Apolipoprotein N-acyltransferase, found in Rhizobium leguminosarum bv. trifolii (strain WSM2304).